The following is a 269-amino-acid chain: Phosphatidylglycerol--prolipoprotein diacylglyceryl transferase (269 aa).

7 helical membrane-spanning segments follow: residues 10–30 (VALAIGPLKIHWYGLMYLIGI), 56–76 (MVFWMSMGVIVGGRLGYVLFY), 92–112 (WKGGMSFHGGFIGVMLAAWWF), 120–140 (FFELMDFVAPMVPIGLGAGRI), 174–194 (PSQLYQFALEGVALFLILWLF), 202–222 (MAVSGMFALFYGIFRFIVEFV), and 237–257 (LTMGQVLCVPMILGGLGLIWL). Residue R139 coordinates a 1,2-diacyl-sn-glycero-3-phospho-(1'-sn-glycerol).

This sequence belongs to the Lgt family.

The protein localises to the cell inner membrane. It catalyses the reaction L-cysteinyl-[prolipoprotein] + a 1,2-diacyl-sn-glycero-3-phospho-(1'-sn-glycerol) = an S-1,2-diacyl-sn-glyceryl-L-cysteinyl-[prolipoprotein] + sn-glycerol 1-phosphate + H(+). It participates in protein modification; lipoprotein biosynthesis (diacylglyceryl transfer). Catalyzes the transfer of the diacylglyceryl group from phosphatidylglycerol to the sulfhydryl group of the N-terminal cysteine of a prolipoprotein, the first step in the formation of mature lipoproteins. This Pseudomonas fluorescens (strain ATCC BAA-477 / NRRL B-23932 / Pf-5) protein is Phosphatidylglycerol--prolipoprotein diacylglyceryl transferase.